Here is a 380-residue protein sequence, read N- to C-terminus: Cytochrome b (380 aa).

4 helical membrane passes run 33–53 (FGSLLGICLITQIVTGLFLAM), 77–98 (WLIRSTHANGASLFFICIYLHV), 113–133 (WNIGVILLMLVMITAFVGYVL), and 178–198 (FFAFHFLLPFVISGASIIHLL). His83 and His97 together coordinate heme b. Positions 182 and 196 each coordinate heme b. Residue His201 participates in a ubiquinone binding. 4 helical membrane-spanning segments follow: residues 226–246 (YKDMLGFLITLTTLAFLTLFT), 288–308 (LGGVLALVSSILVLLLVPILH), 320–340 (ITQMLFWALVADMLILTWIGG), and 347–367 (FMTIGQIASITYFSLFLILIP).

Belongs to the cytochrome b family. In terms of assembly, the cytochrome bc1 complex contains 3 respiratory subunits (MT-CYB, CYC1 and UQCRFS1), 2 core proteins (UQCRC1 and UQCRC2) and probably 6 low-molecular weight proteins. The cofactor is heme b.

The protein localises to the mitochondrion inner membrane. Its function is as follows. Component of the ubiquinol-cytochrome c reductase complex (complex III or cytochrome b-c1 complex) that is part of the mitochondrial respiratory chain. The b-c1 complex mediates electron transfer from ubiquinol to cytochrome c. Contributes to the generation of a proton gradient across the mitochondrial membrane that is then used for ATP synthesis. The polypeptide is Cytochrome b (mt-cyb) (Latimeria chalumnae (Coelacanth)).